Consider the following 266-residue polypeptide: GTP cyclohydrolase III (266 aa).

It belongs to the archaeal-type GTP cyclohydrolase family.

The enzyme catalyses GTP + 3 H2O = 2-amino-5-formylamino-6-(5-phospho-D-ribosylamino)pyrimidin-4(3H)-one + 2 phosphate + 2 H(+). Its function is as follows. Catalyzes the formation of 2-amino-5-formylamino-6-ribofuranosylamino-4(3H)-pyrimidinone ribonucleotide monophosphate and inorganic phosphate from GTP. Also has an independent pyrophosphate phosphohydrolase activity. The sequence is that of GTP cyclohydrolase III from Methanococcus maripaludis (strain DSM 14266 / JCM 13030 / NBRC 101832 / S2 / LL).